Reading from the N-terminus, the 349-residue chain is Protein RecA (349 aa).

66–73 provides a ligand contact to ATP; the sequence is GPESSGKT.

It belongs to the RecA family.

The protein localises to the cytoplasm. Functionally, can catalyze the hydrolysis of ATP in the presence of single-stranded DNA, the ATP-dependent uptake of single-stranded DNA by duplex DNA, and the ATP-dependent hybridization of homologous single-stranded DNAs. It interacts with LexA causing its activation and leading to its autocatalytic cleavage. This Psychrobacter sp. (strain PRwf-1) protein is Protein RecA.